Consider the following 59-residue polypeptide: Large ribosomal subunit protein bL32 (59 aa).

Belongs to the bacterial ribosomal protein bL32 family.

The sequence is that of Large ribosomal subunit protein bL32 from Mesoplasma florum (strain ATCC 33453 / NBRC 100688 / NCTC 11704 / L1) (Acholeplasma florum).